Reading from the N-terminus, the 335-residue chain is Nucleoid-associated protein SeAg_B2375 (335 aa).

Belongs to the YejK family.

The protein resides in the cytoplasm. The protein localises to the nucleoid. The sequence is that of Nucleoid-associated protein SeAg_B2375 from Salmonella agona (strain SL483).